The following is a 150-amino-acid chain: Large ribosomal subunit protein uL13 (150 aa).

A disordered region spans residues 129 to 150 (TEHPHAAQKPQPLQLNPSASAQ). Residues 139–150 (QPLQLNPSASAQ) are compositionally biased toward polar residues.

The protein belongs to the universal ribosomal protein uL13 family. As to quaternary structure, part of the 50S ribosomal subunit.

This protein is one of the early assembly proteins of the 50S ribosomal subunit, although it is not seen to bind rRNA by itself. It is important during the early stages of 50S assembly. This chain is Large ribosomal subunit protein uL13, found in Synechococcus sp. (strain CC9605).